A 211-amino-acid chain; its full sequence is Adenylyl-sulfate kinase (211 aa).

Position 32–39 (32–39 (GLSASGKS)) interacts with ATP. S107 (phosphoserine intermediate) is an active-site residue.

This sequence belongs to the APS kinase family. Homodimer.

It catalyses the reaction adenosine 5'-phosphosulfate + ATP = 3'-phosphoadenylyl sulfate + ADP + H(+). It participates in sulfur metabolism; hydrogen sulfide biosynthesis; sulfite from sulfate: step 2/3. Catalyzes the synthesis of activated sulfate. The sequence is that of Adenylyl-sulfate kinase from Penicillium chrysogenum (Penicillium notatum).